The chain runs to 1044 residues: Protein ITPRID1 (1044 aa).

Polar residues predominate over residues 1 to 14 (MMAQKSQGSDNLQE). Disordered stretches follow at residues 1–20 (MMAQKSQGSDNLQEGQEKSK), 230–251 (EEKAGGESVQRTSVSAAKEHRR), 388–489 (MEEV…SSQE), and 583–607 (PEGAGKVQSHHNESQRSPGNDHTQD). The segment covering 388-398 (MEEVQSFEEET) has biased composition (acidic residues). Polar residues-rich tracts occupy residues 460 to 469 (HSLVSSQDCQ) and 480 to 489 (RASMSFSSQE). Residues 896–937 (SRDMSEEEREEAEQLQTLREALRQQVAELEFQLGDRAQQIRE) adopt a coiled-coil conformation.

This is Protein ITPRID1 from Homo sapiens (Human).